A 149-amino-acid chain; its full sequence is UPAR/Ly6 domain-containing protein bou (149 aa).

The first 31 residues, 1–31 (MWPPKHAHIGWLSSLALVVLLMSLQMVMVSG), serve as a signal peptide directing secretion. Residues 32-126 (IECYVCDTSD…YTCDTDGCNA (95 aa)) are Extracellular-facing. 5 disulfides stabilise this stretch: Cys-34–Cys-74, Cys-37–Cys-48, Cys-65–Cys-91, Cys-100–Cys-115, and Cys-119–Cys-124. Residue Asn-64 is glycosylated (N-linked (GlcNAc...) asparagine). A lipid anchor (GPI-anchor amidated asparagine) is attached at Asn-125. A propeptide spans 126–149 (AAGRLELEWGVAAALLTLTWLLRH) (removed in mature form). The helical transmembrane segment at 127–147 (AGRLELEWGVAAALLTLTWLL) threads the bilayer. Over 148–149 (RH) the chain is Cytoplasmic.

In terms of processing, GPI-anchored.

The protein resides in the cell membrane. Its subcellular location is the cell junction. It is found in the septate junction. It localises to the cytoplasm. The protein localises to the cell cortex. The protein resides in the secreted. Its subcellular location is the apicolateral cell membrane. Its function is as follows. Involved in tracheal paracellular barrier functions mediated by epithelial cell septate junctions. Involved in paracellular barrier functions mediated by glial cell septate junctions in the peripheral nervous system, including the chordotonal organs, but not the hemolymph-brain barrier (the insect blood-brain barrier) of the central nervous system. Required for septate junction assembly, possibly by organizing the preassembly and transport of septate junction proteins such as dlg1/disks large 1, Nrx-IV/Neurexin-IV and the claudin protein kune. Involved in chitin fiber organization during tracheal development. Secreted, possibly in association with extracellular vesicles, to act non-autonomously on tissues distant from its site of expression. The chain is UPAR/Ly6 domain-containing protein bou from Drosophila melanogaster (Fruit fly).